The following is a 1238-amino-acid chain: Receptor-type tyrosine-protein phosphatase eta (1238 aa).

A signal peptide spans 1–28 (MKPAARETRTPPRSPGLRWALLPLLLLL). The Extracellular portion of the chain corresponds to 29–876 (RQGQVLCAGA…LPQDPGVICG (848 aa)). In terms of domain architecture, Fibronectin type-III 1 spans 39 to 122 (APNPIFDIEA…LNKTITTEPW (84 aa)). N-linked (GlcNAc...) asparagine glycans are attached at residues asparagine 62, asparagine 78, asparagine 85, asparagine 90, asparagine 110, asparagine 114, asparagine 145, asparagine 164, asparagine 173, asparagine 182, asparagine 198, asparagine 207, asparagine 244, asparagine 253, asparagine 267, asparagine 278, asparagine 313, asparagine 317, asparagine 333, asparagine 366, asparagine 379, asparagine 398, asparagine 403, asparagine 437, asparagine 452, asparagine 488, asparagine 506, asparagine 538, asparagine 572, asparagine 576, asparagine 662, asparagine 668, asparagine 685, asparagine 691, asparagine 725, asparagine 811, and asparagine 838. The Fibronectin type-III 2 domain occupies 170 to 266 (PGTNNSFAFP…GQPRNKVFKT (97 aa)). Fibronectin type-III domains lie at 270-358 (QVSD…SPDQ), 359-443 (VSDF…TDPS), 444-527 (AVTD…TQYT), 528-621 (RPSS…TEPE), 622-718 (PVTS…TDPP), and 717-803 (PPTP…SEVL). A helical membrane pass occupies residues 877 to 897 (AVFGCIFGALAITAVGGFIFW). Residues 898–1238 (RKKRTDAKNN…MFGKTNGYIA (341 aa)) lie on the Cytoplasmic side of the membrane. Serine 910 carries the post-translational modification Phosphoserine. The region spanning 942 to 1199 (FAEEYEDLKL…VFLNQCVLDI (258 aa)) is the Tyrosine-protein phosphatase domain. Residues aspartate 1106, 1140-1146 (CSAGVGR), and glutamine 1184 each bind substrate. Cysteine 1140 acts as the Phosphocysteine intermediate in catalysis.

It belongs to the protein-tyrosine phosphatase family. Receptor class 3 subfamily. As to quaternary structure, monomer. Interacts with CTNNB1 (phosphorylated) and JUP (phosphorylated). Interacts with FLT3 (phosphorylated). Interacts with GAB1 and GRB2. Expressed at high levels in brain, kidney, spleen and intestine, and at lower levels in liver, lung, thymus and heart. Expressed at a high level in the myeloid cell line FDC-P2, and at a lower level in the pre-B lymphoid cell line WEHI-231 and the T hybridoma cell line HB21.7.31. Not expressed in the fibroblast cell line NIH3T3 or the erythroid cell line F5-5. Expressed in macrophages.

It is found in the cell membrane. Its subcellular location is the cell projection. The protein resides in the ruffle membrane. It localises to the cell junction. It carries out the reaction O-phospho-L-tyrosyl-[protein] + H2O = L-tyrosyl-[protein] + phosphate. In terms of biological role, tyrosine phosphatase which dephosphorylates or contributes to the dephosphorylation of CTNND1, FLT3, PDGFRB, MET, KDR, LYN, SRC, MAPK1, MAPK3, EGFR, TJP1, OCLN, PIK3R1 and PIK3R2. Plays a role in cell adhesion, migration, proliferation and differentiation. Has a role in megakaryocytes and platelet formation. Involved in vascular development. May be involved in the mechanism of contact inhibition of cell growth. Regulator of macrophage adhesion and spreading. Positively affects cell-matrix adhesion. Positive regulator of platelet activation and thrombosis. Negative regulator of cell proliferation. Negative regulator of PDGF-stimulated cell migration; through dephosphorylation of PDGFR. Positive regulator of endothelial cell survival, as well as of VEGF-induced SRC and AKT activation; through KDR dephosphorylation. Negative regulator of EGFR signaling pathway; through EGFR dephosphorylation. Enhances the barrier function of epithelial junctions during reassembly. Negatively regulates T-cell receptor (TCR) signaling. Upon T-cell TCR activation, it is up-regulated and excluded from the immunological synapses, while upon T-cell-antigen presenting cells (APC) disengagement, it is no longer excluded and can dephosphorylate PLCG1 and LAT to down-regulate prolongation of signaling. This Mus musculus (Mouse) protein is Receptor-type tyrosine-protein phosphatase eta (Ptprj).